The chain runs to 120 residues: NAD(P)H-quinone oxidoreductase subunit 3, chloroplastic (120 aa).

3 helical membrane passes run 9 to 29 (IFWA…FISG), 64 to 84 (MFAL…PWAM), and 88 to 108 (VLGV…IVGL).

This sequence belongs to the complex I subunit 3 family. In terms of assembly, NDH is composed of at least 16 different subunits, 5 of which are encoded in the nucleus.

The protein localises to the plastid. Its subcellular location is the chloroplast thylakoid membrane. The catalysed reaction is a plastoquinone + NADH + (n+1) H(+)(in) = a plastoquinol + NAD(+) + n H(+)(out). The enzyme catalyses a plastoquinone + NADPH + (n+1) H(+)(in) = a plastoquinol + NADP(+) + n H(+)(out). Functionally, NDH shuttles electrons from NAD(P)H:plastoquinone, via FMN and iron-sulfur (Fe-S) centers, to quinones in the photosynthetic chain and possibly in a chloroplast respiratory chain. The immediate electron acceptor for the enzyme in this species is believed to be plastoquinone. Couples the redox reaction to proton translocation, and thus conserves the redox energy in a proton gradient. This chain is NAD(P)H-quinone oxidoreductase subunit 3, chloroplastic, found in Panax ginseng (Korean ginseng).